Reading from the N-terminus, the 485-residue chain is Adenosylhomocysteinase (485 aa).

Substrate-binding residues include Thr-64, Asp-139, and Glu-205. Position 206–208 (206–208 (TTT)) interacts with NAD(+). The substrate site is built by Lys-235 and Asp-239. NAD(+) contacts are provided by residues Asn-240, 269–274 (GYGDVG), Glu-292, Asn-327, 348–350 (IGH), and Asn-397.

This sequence belongs to the adenosylhomocysteinase family. NAD(+) serves as cofactor.

The enzyme catalyses S-adenosyl-L-homocysteine + H2O = L-homocysteine + adenosine. It functions in the pathway amino-acid biosynthesis; L-homocysteine biosynthesis; L-homocysteine from S-adenosyl-L-homocysteine: step 1/1. Functionally, adenosylhomocysteine is a competitive inhibitor of S-adenosyl-L-methionine-dependent methyl transferase reactions; therefore adenosylhomocysteinase may play a key role in the control of methylations via regulation of the intracellular concentration of adenosylhomocysteine. The polypeptide is Adenosylhomocysteinase (SAHH) (Medicago sativa (Alfalfa)).